Here is a 228-residue protein sequence, read N- to C-terminus: Protein GrpE (228 aa).

The span at methionine 1 to serine 22 shows a compositional bias: basic and acidic residues. Positions methionine 1–leucine 71 are disordered. The span at glutamine 38–asparagine 53 shows a compositional bias: polar residues.

The protein belongs to the GrpE family. Homodimer.

The protein localises to the cytoplasm. Functionally, participates actively in the response to hyperosmotic and heat shock by preventing the aggregation of stress-denatured proteins, in association with DnaK and GrpE. It is the nucleotide exchange factor for DnaK and may function as a thermosensor. Unfolded proteins bind initially to DnaJ; upon interaction with the DnaJ-bound protein, DnaK hydrolyzes its bound ATP, resulting in the formation of a stable complex. GrpE releases ADP from DnaK; ATP binding to DnaK triggers the release of the substrate protein, thus completing the reaction cycle. Several rounds of ATP-dependent interactions between DnaJ, DnaK and GrpE are required for fully efficient folding. The protein is Protein GrpE of Coprothermobacter proteolyticus (strain ATCC 35245 / DSM 5265 / OCM 4 / BT).